The primary structure comprises 340 residues: Protein-arginine kinase (340 aa).

The Phosphagen kinase C-terminal domain occupies 14–244 (IVITTRIRLA…EQIINQENLS (231 aa)). ATP is bound by residues 17 to 21 (TTRIR), histidine 81, arginine 115, 166 to 170 (RASVM), and 197 to 202 (RGLWGE).

The protein belongs to the ATP:guanido phosphotransferase family.

It catalyses the reaction L-arginyl-[protein] + ATP = N(omega)-phospho-L-arginyl-[protein] + ADP + H(+). Catalyzes the specific phosphorylation of arginine residues in proteins. This chain is Protein-arginine kinase, found in Clostridium acetobutylicum (strain ATCC 824 / DSM 792 / JCM 1419 / IAM 19013 / LMG 5710 / NBRC 13948 / NRRL B-527 / VKM B-1787 / 2291 / W).